Consider the following 136-residue polypeptide: Large ribosomal subunit protein eL27 (136 aa).

A KOW domain is found at 5–40 (MKPGKVVLVLAGRYSGRKAVIVKNIDDGTSDRPYSH). An N6-acetyllysine mark is found at Lys-27 and Lys-93.

Belongs to the eukaryotic ribosomal protein eL27 family. In terms of assembly, component of the large ribosomal subunit. Interacts with RRP1B. Component of the large ribosomal subunit. Interacts with RRP1B. Interacts with DHX33.

It localises to the cytoplasm. Its subcellular location is the cytosol. The protein resides in the rough endoplasmic reticulum. Component of the large ribosomal subunit. Required for proper rRNA processing and maturation of 28S and 5.8S rRNAs. This Bos taurus (Bovine) protein is Large ribosomal subunit protein eL27 (RPL27).